Reading from the N-terminus, the 172-residue chain is ATP synthase subunit b (172 aa).

The chain crosses the membrane as a helical span at residues Leu-27 to Glu-47.

The protein belongs to the ATPase B chain family. In terms of assembly, F-type ATPases have 2 components, F(1) - the catalytic core - and F(0) - the membrane proton channel. F(1) has five subunits: alpha(3), beta(3), gamma(1), delta(1), epsilon(1). F(0) has four main subunits: a(1), b(1), b'(1) and c(10-14). The alpha and beta chains form an alternating ring which encloses part of the gamma chain. F(1) is attached to F(0) by a central stalk formed by the gamma and epsilon chains, while a peripheral stalk is formed by the delta, b and b' chains.

It is found in the cellular thylakoid membrane. F(1)F(0) ATP synthase produces ATP from ADP in the presence of a proton or sodium gradient. F-type ATPases consist of two structural domains, F(1) containing the extramembraneous catalytic core and F(0) containing the membrane proton channel, linked together by a central stalk and a peripheral stalk. During catalysis, ATP synthesis in the catalytic domain of F(1) is coupled via a rotary mechanism of the central stalk subunits to proton translocation. In terms of biological role, component of the F(0) channel, it forms part of the peripheral stalk, linking F(1) to F(0). The protein is ATP synthase subunit b of Prochlorococcus marinus (strain MIT 9303).